A 1195-amino-acid polypeptide reads, in one-letter code: Probable beta-tubulin polyglutamylase (1195 aa).

Residues M1 to E110 are disordered. Composition is skewed to acidic residues over residues D17 to Q27 and Q44 to N79. Coiled coils occupy residues D59–E103 and Q144–Q260. Residues Q80–N89 are compositionally biased toward low complexity. The span at L90–E110 shows a compositional bias: polar residues. A disordered region spans residues P281–Q343. Residues D294–E316 are compositionally biased toward acidic residues. The segment covering R322–N334 has biased composition (basic residues). The 354-residue stretch at K350–N703 folds into the TTL domain. ATP is bound by residues Q500–L503, K513, and D515. The interval P674 to D756 is c-MTBD region. Positions R783–Q862 are disordered. A compositionally biased stretch (polar residues) spans P825–N849. Positions E850–Q860 are enriched in acidic residues.

It localises to the cytoplasm. The protein resides in the cytoskeleton. The protein localises to the cell projection. It is found in the cilium. Its subcellular location is the cilium basal body. Functionally, probable tubulin polyglutamylase with a strong preference for beta-tubulin. The polypeptide is Probable beta-tubulin polyglutamylase (Ttll6a) (Tetrahymena thermophila (strain SB210)).